The primary structure comprises 103 residues: Putative membrane protein insertion efficiency factor (103 aa).

The protein belongs to the UPF0161 family.

It is found in the cell inner membrane. Functionally, could be involved in insertion of integral membrane proteins into the membrane. The protein is Putative membrane protein insertion efficiency factor of Chlamydia caviae (strain ATCC VR-813 / DSM 19441 / 03DC25 / GPIC) (Chlamydophila caviae).